Consider the following 253-residue polypeptide: Putative B3 domain-containing protein Os03g0619850 (253 aa).

The TF-B3 DNA-binding region spans 26–119 (MSCFLIRMTT…CFEVMILDSD (94 aa)). Disordered stretches follow at residues 126 to 150 (LKSN…AGPP) and 230 to 253 (HRDA…EQDS). Over residues 230-239 (HRDADQERQM) the composition is skewed to basic and acidic residues.

Its subcellular location is the nucleus. This chain is Putative B3 domain-containing protein Os03g0619850, found in Oryza sativa subsp. japonica (Rice).